The primary structure comprises 409 residues: Small ribosomal subunit protein mS47 (409 aa).

The transit peptide at 1–26 (MQTVKALRRVSEPLQWVRSVSYGRRF) directs the protein to the mitochondrion. The interval 388–409 (ASELDDSDSELKLPTAQREPYF) is disordered.

This sequence belongs to the enoyl-CoA hydratase/isomerase family. Mitochondrion-specific ribosomal protein mS47 subfamily. As to quaternary structure, component of the mitochondrial ribosome small subunit.

The protein resides in the mitochondrion. This chain is Small ribosomal subunit protein mS47, found in Arabidopsis thaliana (Mouse-ear cress).